We begin with the raw amino-acid sequence, 312 residues long: Isethionate sulfite-lyase activating enzyme (312 aa).

The Radical SAM core domain occupies 20-304; sequence HDGPGIRTIV…GLQKTALDIL (285 aa). [4Fe-4S] cluster-binding residues include Cys34, Cys38, Cys41, Cys60, Cys66, Cys69, Cys73, Cys93, Cys96, Cys100, and Cys104. 40-42 serves as a coordination point for S-adenosyl-L-methionine; sequence WCS. 2 consecutive 4Fe-4S ferredoxin-type domains span residues 51 to 83 and 84 to 115; these read AELACNPGRCIDISKCGHCLTACPHGAITCGDD and DKPRIDRSHCADCSIPCAEVCPAQGLLVYGKK. S-adenosyl-L-methionine is bound by residues Gly144, 193 to 195, and His267; that span reads DIK.

It belongs to the organic radical-activating enzymes family. Monomer. [4Fe-4S] cluster is required as a cofactor.

The enzyme catalyses glycyl-[protein] + reduced [flavodoxin] + S-adenosyl-L-methionine = glycin-2-yl radical-[protein] + semiquinone [flavodoxin] + 5'-deoxyadenosine + L-methionine + H(+). It functions in the pathway organosulfur degradation; alkanesulfonate degradation. Its function is as follows. Involved in an anaerobic respiration pathway that converts the sulfonate isethionate (2-hydroxyethanesulfonate) to ammonia, acetate and sulfide. Catalyzes activation of the isethionate sulfite-lyase IslA under anaerobic conditions by generation of an organic free radical on a glycine residue, via a homolytic cleavage of S-adenosyl-L-methionine (SAM). In Desulfovibrio desulfuricans (strain ATCC 27774 / DSM 6949 / MB), this protein is Isethionate sulfite-lyase activating enzyme.